The primary structure comprises 327 residues: Petrobactin synthase (327 aa).

The enzyme catalyses N(8)-citryl-spermidine + 3,4-dihydroxybenzoyl-[aryl-carrier protein] = N(1)-(3,4-dihydroxybenzoyl)-N(8)-citryl-spermidine + holo-[aryl-carrier protein] + H(+). The catalysed reaction is N(8),N'(8)-citryl-bis(spermidine) + 3,4-dihydroxybenzoyl-[aryl-carrier protein] = N(1)-(3,4-dihydroxybenzoyl)-N(8),N'(8)-citryl-bis(spermidine) + holo-[aryl-carrier protein] + H(+). It catalyses the reaction N(1)-(3,4-dihydroxybenzoyl)-N(8),N'(8)-citryl-bis(spermidine) + 3,4-dihydroxybenzoyl-[aryl-carrier protein] = petrobactin + holo-[aryl-carrier protein] + H(+). The protein operates within siderophore biosynthesis; petrobactin biosynthesis. Involved in the biosynthesis of petrobactin, a catecholate siderophore that functions in both iron acquisition and virulence. Transfers the activated 3,4-dihydroxybenzoate (3,4-DHBA) moiety from 3,4-DHBA-loaded AsbD to different receipient molecules, including N-citryl-spermidine, N8,N'8-citryl-bis(spermidine) and N1-(3,4-dihydroxybenzoyl)-N8,N'8-citryl-bis(spermidine). Also catalyzes the transfer of the activated 3,4-DHBA moiety from 3,4-DHBA-loaded AsbD to spermidine to generate DHB-spermidine (DHB-SP). The polypeptide is Petrobactin synthase (Bacillus anthracis).